A 739-amino-acid polypeptide reads, in one-letter code: Polyribonucleotide nucleotidyltransferase (739 aa).

Mg(2+) contacts are provided by D488 and D494. The 60-residue stretch at 555–614 folds into the KH domain; sequence PKIVTLKINPDKIRDVIGPGGKVINGIIDETGVKIDIDQDGTVFIASTDQDGINHARQLI. In terms of domain architecture, S1 motif spans 624–692; it reads GEEFDGTVRR…DKGRVNASHK (69 aa). A disordered region spans residues 698 to 739; it reads GMSPEDRAAYDEKKKTERDSRPPRRDTGSRPPRDGQRPPRRN. The segment covering 701 to 739 has biased composition (basic and acidic residues); it reads PEDRAAYDEKKKTERDSRPPRRDTGSRPPRDGQRPPRRN.

Belongs to the polyribonucleotide nucleotidyltransferase family. It depends on Mg(2+) as a cofactor.

It is found in the cytoplasm. The catalysed reaction is RNA(n+1) + phosphate = RNA(n) + a ribonucleoside 5'-diphosphate. In terms of biological role, involved in mRNA degradation. Catalyzes the phosphorolysis of single-stranded polyribonucleotides processively in the 3'- to 5'-direction. This is Polyribonucleotide nucleotidyltransferase from Exiguobacterium sibiricum (strain DSM 17290 / CCUG 55495 / CIP 109462 / JCM 13490 / 255-15).